The sequence spans 78 residues: MLKRSKFETTQSQIMHRAEELISAASNRYRITVQVANRAKRRRYEDFENNEDAMMKPVLRAIIEMSDELTQPEIIGEL.

It belongs to the RNA polymerase subunit omega family. In cyanobacteria the RNAP catalytic core is composed of 2 alpha, 1 beta, 1 beta', 1 gamma and 1 omega subunit. When a sigma factor is associated with the core the holoenzyme is formed, which can initiate transcription.

The enzyme catalyses RNA(n) + a ribonucleoside 5'-triphosphate = RNA(n+1) + diphosphate. Functionally, promotes RNA polymerase assembly. Latches the N- and C-terminal regions of the beta' subunit thereby facilitating its interaction with the beta and alpha subunits. This chain is DNA-directed RNA polymerase subunit omega, found in Nostoc punctiforme (strain ATCC 29133 / PCC 73102).